The sequence spans 544 residues: Sphingosine-1-phosphate lyase (544 aa).

The Lumenal segment spans residues 1–29 (MDSFSYSSMKSMLIQARGSLNSRLSEFEP). The chain crosses the membrane as a helical; Signal-anchor for type III membrane protein span at residues 30–50 (LVLLLVPLVSLFLAQIIGSVF). Residues 51–544 (GVVHEKGLKA…LLVSFMDSQY (494 aa)) are Cytoplasmic-facing. K349 carries the post-translational modification N6-(pyridoxal phosphate)lysine.

It belongs to the group II decarboxylase family. Sphingosine-1-phosphate lyase subfamily. The cofactor is pyridoxal 5'-phosphate. Expressed in the peripheral parts of leaves and the bases of trichomes.

It localises to the endoplasmic reticulum membrane. The catalysed reaction is sphinganine 1-phosphate = hexadecanal + phosphoethanolamine. The protein operates within lipid metabolism; sphingolipid metabolism. Its function is as follows. Cleaves phosphorylated sphingoid bases (PSBs), such as sphingosine-1-phosphate, into fatty aldehydes and phosphoethanolamine. May play a minor role in maintenance of sphingolipid metabolism during normal plant development and growth, but be required for maintaining sphingoid long chain bases (LCB) and their phosphorylated derivatives (LCB-P) levels when sphingolipid metabolism is perturbed. May play a role in dehydration stress. The polypeptide is Sphingosine-1-phosphate lyase (DPL1) (Arabidopsis thaliana (Mouse-ear cress)).